The sequence spans 293 residues: DNA-directed RNA polymerase III subunit rpc6 (293 aa).

The protein belongs to the eukaryotic RPC34/RPC39 RNA polymerase subunit family. In terms of assembly, component of the RNA polymerase III (Pol III) complex.

It localises to the nucleus. Its function is as follows. DNA-dependent RNA polymerase catalyzes the transcription of DNA into RNA using the four ribonucleoside triphosphates as substrates. Specific peripheric component of RNA polymerase III which synthesizes small RNAs, such as 5S rRNA and tRNAs. May direct RNA Pol III binding to the TFIIIB-DNA complex. This Dictyostelium discoideum (Social amoeba) protein is DNA-directed RNA polymerase III subunit rpc6 (polr3f).